Here is a 424-residue protein sequence, read N- to C-terminus: Kynureninase (424 aa).

Residues leucine 106, threonine 107, 134-137, aspartate 219, histidine 222, and tyrosine 244 each bind pyridoxal 5'-phosphate; that span reads FPSD. Residue lysine 245 is modified to N6-(pyridoxal phosphate)lysine. 2 residues coordinate pyridoxal 5'-phosphate: tryptophan 274 and asparagine 302.

This sequence belongs to the kynureninase family. Homodimer. Requires pyridoxal 5'-phosphate as cofactor.

It carries out the reaction L-kynurenine + H2O = anthranilate + L-alanine + H(+). The catalysed reaction is 3-hydroxy-L-kynurenine + H2O = 3-hydroxyanthranilate + L-alanine + H(+). The protein operates within amino-acid degradation; L-kynurenine degradation; L-alanine and anthranilate from L-kynurenine: step 1/1. It participates in cofactor biosynthesis; NAD(+) biosynthesis; quinolinate from L-kynurenine: step 2/3. Functionally, catalyzes the cleavage of L-kynurenine (L-Kyn) and L-3-hydroxykynurenine (L-3OHKyn) into anthranilic acid (AA) and 3-hydroxyanthranilic acid (3-OHAA), respectively. The sequence is that of Kynureninase from Xanthomonas campestris pv. campestris (strain B100).